A 430-amino-acid chain; its full sequence is Proteinase-activated receptor 1 (430 aa).

Residues 1 to 21 (MGPRRLLIVALGLSLCGPLLS) form the signal peptide. Positions 22 to 41 (SRVPMSQPESERTDATVNPR) are cleaved as a propeptide — removed for receptor activation. Residues 42 to 107 (SFFLRNPSEN…SGYLTSPWLT (66 aa)) lie on the Extracellular side of the membrane. Asparagine 67 and asparagine 80 each carry an N-linked (GlcNAc...) asparagine glycan. The chain crosses the membrane as a helical span at residues 108–133 (LFMPSVYTIVFIVSLPLNVLAIAVFV). The Cytoplasmic portion of the chain corresponds to 134 to 142 (LRMKVKKPA). The helical transmembrane segment at 143–162 (VVYMLHLAMADVLFVSVLPF) threads the bilayer. Residues 163 to 181 (KISYYFSGTDWQFGSGMCR) are Extracellular-facing. Cysteines 180 and 259 form a disulfide. A helical transmembrane segment spans residues 182–203 (FATAAFYGNMYASIMLMTVISI). Residues 204–223 (DRFLAVVYPIQSLSWRTLGR) lie on the Cytoplasmic side of the membrane. Residues 224 to 244 (ANFTCVVIWVMAIMGVVPLLL) form a helical membrane-spanning segment. Residues 245–273 (KEQTTRVPGLNITTCHDVLSENLMQGFYS) lie on the Extracellular side of the membrane. An N-linked (GlcNAc...) asparagine glycan is attached at asparagine 255. The chain crosses the membrane as a helical span at residues 274-293 (YYFSAFSAIFFLVPLIVSTV). Topologically, residues 294-316 (CYTSIIRCLSSSAVANRSKKSRA) are cytoplasmic. The helical transmembrane segment at 317-339 (LFLSAAVFCIFIVCFGPTNVLLI) threads the bilayer. Residues 340-354 (VHYLFLSDSPGTEAA) lie on the Extracellular side of the membrane. The helical transmembrane segment at 355–379 (YFAYLLCVCVSSVSCCIDPLIYYYA) threads the bilayer. Residues 380 to 430 (SSECQRHLYSILCCKESSDPNSCNSTGQLMPSKMDTCSSHLNNSIYKKLLA) are Cytoplasmic-facing. Serine 423 is subject to Phosphoserine.

The protein belongs to the G-protein coupled receptor 1 family. Post-translationally, proteolytic cleavage by thrombin generates a new N-terminus that functions as a tethered ligand. Also proteolytically cleaved by cathepsin CTSG. In terms of processing, phosphorylated in the C-terminal tail; probably mediating desensitization prior to the uncoupling and internalization of the receptor.

The protein resides in the cell membrane. In terms of biological role, high affinity receptor that binds the activated thrombin, leading to calcium release from intracellular stores. The thrombin-activated receptor signaling pathway is mediated through PTX-insensitive G proteins, activation of phospholipase C resulting in the production of 1D-myo-inositol 1,4,5-trisphosphate (InsP3) which binds to InsP3 receptors causing calcium release from the stores. In astrocytes, the calcium released into the cytosol allows the Ca(2+)-dependent release of L-glutamate into the synaptic cleft through BEST1, that targets the neuronal postsynaptic GRIN2A/NMDAR receptor resulting in the synaptic plasticity regulation. May play a role in platelets activation and in vascular development. Mediates up-regulation of pro-inflammatory cytokines, such as MCP-1/CCL2 and IL6, triggered by coagulation factor Xa (F10) in cardiac fibroblasts and umbilical vein endothelial cells. The polypeptide is Proteinase-activated receptor 1 (Mus musculus (Mouse)).